The sequence spans 383 residues: Ribosomal RNA large subunit methyltransferase G (383 aa).

It belongs to the methyltransferase superfamily. RlmG family.

It localises to the cytoplasm. It catalyses the reaction guanosine(1835) in 23S rRNA + S-adenosyl-L-methionine = N(2)-methylguanosine(1835) in 23S rRNA + S-adenosyl-L-homocysteine + H(+). Its function is as follows. Specifically methylates the guanine in position 1835 (m2G1835) of 23S rRNA. The protein is Ribosomal RNA large subunit methyltransferase G of Shewanella amazonensis (strain ATCC BAA-1098 / SB2B).